The following is a 41-amino-acid chain: uncharacterized protein (41 aa).

The disordered stretch occupies residues 1–41; the sequence is MGKKHRNRITGQKKNNHIPEKDIIAAEEAHGKEYSAAKRKP. Over residues 17 to 41 the composition is skewed to basic and acidic residues; that stretch reads HIPEKDIIAAEEAHGKEYSAAKRKP.

This is an uncharacterized protein from Bacillus subtilis (strain 168).